The primary structure comprises 466 residues: Asparagine--tRNA ligase (466 aa).

It belongs to the class-II aminoacyl-tRNA synthetase family. In terms of assembly, homodimer.

Its subcellular location is the cytoplasm. The catalysed reaction is tRNA(Asn) + L-asparagine + ATP = L-asparaginyl-tRNA(Asn) + AMP + diphosphate + H(+). The protein is Asparagine--tRNA ligase of Shewanella denitrificans (strain OS217 / ATCC BAA-1090 / DSM 15013).